Consider the following 786-residue polypeptide: ATP-dependent RNA helicase SUPV3L1, mitochondrial (786 aa).

The transit peptide at 1-22 (MSFSRALLWARLPAGRQAGHRA) directs the protein to the mitochondrion. Lysine 99 carries the N6-acetyllysine modification. One can recognise a Helicase ATP-binding domain in the interval 194-334 (DARAMQRKII…AIDLVMELMY (141 aa)). 207-214 (GPTNSGKT) serves as a coordination point for ATP. Lysine 220 carries the post-translational modification N6-acetyllysine. Residues 353–518 (VLDHALESLD…GLHPTAEQIE (166 aa)) enclose the Helicase C-terminal domain. The tract at residues 650 to 786 (PDASLIRDLQ…RRKKKEPDSD (137 aa)) is interaction with LAMTOR5, important for protein stability. Disordered stretches follow at residues 690 to 730 (GFPS…DAGE) and 749 to 786 (KQLEKEWMTQQTEHNKEKTESGTHPKGTRRKKKEPDSD). The span at 693-705 (SGSQSRLSGTLKS) shows a compositional bias: polar residues. Position 725 is a phosphoserine (serine 725). Basic and acidic residues predominate over residues 749–771 (KQLEKEWMTQQTEHNKEKTESGT).

This sequence belongs to the helicase family. Homodimer; in free form. Component of the mitochondrial degradosome (mtEXO) complex which is a heteropentamer containing 2 copies of SUPV3L1 and 3 copies of PNPT1. As part of mitochondrial degradosome complex, interacts with GRSF1 in a RNA-dependent manner; the interaction enhances the activity of the complex. Interacts with LAMTOR5/HBXIP, WRN and BLM. Mg(2+) is required as a cofactor. Requires Mn(2+) as cofactor. As to expression, broadly expressed.

It is found in the nucleus. The protein resides in the mitochondrion matrix. Its subcellular location is the mitochondrion nucleoid. It carries out the reaction ATP + H2O = ADP + phosphate + H(+). With respect to regulation, helicase activity toward DNA substrate is inhibited by micromolar concentrations of 5,6-dichloro-1-(beta-D-ribofuranosyl)benzotriazole (DRBT) and 4,5,6,7-tetrabromobenzotriazole (TBBT). Helicase activity toward RNA substrate is inhibited by elevated concentrations of TBBT. Inhibited by some ring-expanded nucleoside analogs. In terms of biological role, major helicase player in mitochondrial RNA metabolism. Component of the mitochondrial degradosome (mtEXO) complex, that degrades 3' overhang double-stranded RNA with a 3'-to-5' directionality in an ATP-dependent manner. Involved in the degradation of non-coding mitochondrial transcripts (MT-ncRNA) and tRNA-like molecules. ATPase and ATP-dependent multisubstrate helicase, able to unwind double-stranded (ds) DNA and RNA, and RNA/DNA heteroduplexes in the 5'-to-3' direction. Plays a role in the RNA surveillance system in mitochondria; regulates the stability of mature mRNAs, the removal of aberrantly formed mRNAs and the rapid degradation of non coding processing intermediates. Also implicated in recombination and chromatin maintenance pathways. May protect cells from apoptosis. Associates with mitochondrial DNA. This chain is ATP-dependent RNA helicase SUPV3L1, mitochondrial (SUPV3L1), found in Homo sapiens (Human).